The chain runs to 3187 residues: Cilia- and flagella-associated protein 47 (3187 aa).

In terms of domain architecture, Calponin-homology (CH) spans 1746-1869 (SDSERILLSW…LCVYMYERLP (124 aa)). Residues 2024–2052 (KLTESRQYPKHDDDMSSSGSDTDQGCSDS) are disordered. Basic and acidic residues predominate over residues 2026 to 2037 (TESRQYPKHDDD).

Interacts with CFAP65. Highly expressed in spermatzoa (at protein level).

It localises to the cytoplasm. The protein resides in the cytoskeleton. It is found in the flagellum basal body. Plays a role in flagellar formation and sperm motility. This chain is Cilia- and flagella-associated protein 47, found in Homo sapiens (Human).